A 134-amino-acid polypeptide reads, in one-letter code: Ribonuclease VapC (134 aa).

Residues 4 to 124 form the PINc domain; the sequence is IVDTSIIIAL…NTKDFKRIPE (121 aa). Asp-6 is a binding site for Mg(2+).

This sequence belongs to the PINc/VapC protein family. Requires Mg(2+) as cofactor.

Toxic component of a type II toxin-antitoxin (TA) system. Has ssRNase activity. Its RNase activity is partially neutralized by cognate antitoxin VapB. Rapidly induces apoptosis upon microinjection into mouse fibroblasts (L929 line). Probably contributes to host cell death if bacterial cell lysis occurs during host infection. This chain is Ribonuclease VapC, found in Rickettsia bellii (strain RML369-C).